The chain runs to 252 residues: Adenosylcobinamide-GDP ribazoletransferase (252 aa).

A run of 7 helical transmembrane segments spans residues 34-54 (GASF…IIYK), 55-75 (LCII…AGIV), 113-133 (YACL…CSIV), 138-158 (LIII…AFIG), 174-194 (IGKW…FFLM), 198-218 (FIYV…FNVF), and 230-250 (LLGA…CVII).

This sequence belongs to the CobS family. The cofactor is Mg(2+).

It localises to the cell membrane. The catalysed reaction is alpha-ribazole + adenosylcob(III)inamide-GDP = adenosylcob(III)alamin + GMP + H(+). It carries out the reaction alpha-ribazole 5'-phosphate + adenosylcob(III)inamide-GDP = adenosylcob(III)alamin 5'-phosphate + GMP + H(+). Its pathway is cofactor biosynthesis; adenosylcobalamin biosynthesis; adenosylcobalamin from cob(II)yrinate a,c-diamide: step 7/7. Its function is as follows. Joins adenosylcobinamide-GDP and alpha-ribazole to generate adenosylcobalamin (Ado-cobalamin). Also synthesizes adenosylcobalamin 5'-phosphate from adenosylcobinamide-GDP and alpha-ribazole 5'-phosphate. The sequence is that of Adenosylcobinamide-GDP ribazoletransferase from Clostridium kluyveri (strain NBRC 12016).